The chain runs to 216 residues: Probable GTP-binding protein EngB (216 aa).

Residues 43 to 216 form the EngB-type G domain; sequence DRLEVCFAGR…TLRSIITDLT (174 aa). GTP-binding positions include 51 to 58, 78 to 82, 96 to 99, 163 to 166, and 197 to 199; these read GRSNVGKS, GRTQE, DLPG, TKAD, and TSS. Residues S58 and T80 each coordinate Mg(2+).

It belongs to the TRAFAC class TrmE-Era-EngA-EngB-Septin-like GTPase superfamily. EngB GTPase family. It depends on Mg(2+) as a cofactor.

Its function is as follows. Necessary for normal cell division and for the maintenance of normal septation. The protein is Probable GTP-binding protein EngB of Roseobacter denitrificans (strain ATCC 33942 / OCh 114) (Erythrobacter sp. (strain OCh 114)).